Consider the following 352-residue polypeptide: MGRPEFNRGGGGGGFRGGRGGDRGGSRGGFGGGGRGGYGGGDRGSFGGGDRGGFRGGRGGGDRGGFRGGRGGGDRGGFGGRGSPRGGFGGRGSPRGGRGSPRGGRGGAGGMRGGKTVVVEPHRLGGVFIVKGKEDALATKNMVVGESVYGEKRVSVDDGAGSIEYRVWNPFRSKLAASIMGGLENTHIKPGTKLLYLGAASGTTVSHCSDVVGPEGIVYAVEFSHRSGRDLLGVAKKRPNVVPIVEDARHPHKYRMLVGMVDVIFSDVAQPDQARIVALNAQNFLRNGGHAVISIKANCIDSTAEPEAVFAGEVNKLKEEKFKPLEQVTLEPYERDHAVVVAVYRPVKGKKV.

The disordered stretch occupies residues 1–115 (MGRPEFNRGG…GGAGGMRGGK (115 aa)). 22 positions are modified to asymmetric dimethylarginine: Arg8, Arg16, Arg19, Arg23, Arg27, Arg35, Arg43, Arg51, Arg55, Arg58, Arg63, Arg67, Arg70, Arg75, Arg81, Arg85, Arg91, Arg95, Arg98, Arg102, Arg105, and Arg112. A compositionally biased stretch (gly residues) spans 8–18 (RGGGGGGFRGG). A compositionally biased stretch (gly residues) spans 26 to 59 (SRGGFGGGGRGGYGGGDRGSFGGGDRGGFRGGRG). A compositionally biased stretch (gly residues) spans 66-113 (FRGGRGGGDRGGFGGRGSPRGGFGGRGSPRGGRGSPRGGRGGAGGMRG). S-adenosyl-L-methionine-binding positions include 203–204 (TT), 222–223 (EF), 247–248 (DA), and 267–270 (DVAQ).

Belongs to the methyltransferase superfamily. Fibrillarin family. In terms of assembly, component of box C/D small nucleolar ribonucleoprotein (snoRNP) particles. It is associated with the U3, U8 and U13 small nuclear RNAs. In terms of processing, by homology to other fibrillarins, some or all of the N-terminal domain arginines are modified to asymmetric dimethylarginine (DMA).

The protein localises to the nucleus. The protein resides in the nucleolus. It localises to the nucleoplasm. The enzyme catalyses L-glutaminyl-[histone H2A] + S-adenosyl-L-methionine = N(5)-methyl-L-glutaminyl-[histone H2A] + S-adenosyl-L-homocysteine + H(+). Its function is as follows. S-adenosyl-L-methionine-dependent methyltransferase that has the ability to methylate both RNAs and proteins. Involved in pre-rRNA processing. Utilizes the methyl donor S-adenosyl-L-methionine to catalyze the site-specific 2'-hydroxyl methylation of ribose moieties in pre-ribosomal RNA. Site specificity is provided by a guide RNA that base pairs with the substrate. Methylation occurs at a characteristic distance from the sequence involved in base pairing with the guide RNA. Also acts as a protein methyltransferase by mediating methylation of 'Gln-105' of histone H2A (H2AQ105me), a modification that impairs binding of the FACT complex and is specifically present at 35S ribosomal DNA locus. Plays a role in modulation of nucleolus size most likely through regulating the ribosomal RNA (rRNA) pool. The chain is rRNA 2'-O-methyltransferase fibrillarin from Caenorhabditis elegans.